Reading from the N-terminus, the 242-residue chain is UPF0246 protein SP_1547 (242 aa).

Belongs to the UPF0246 family.

This chain is UPF0246 protein SP_1547, found in Streptococcus pneumoniae serotype 4 (strain ATCC BAA-334 / TIGR4).